The chain runs to 142 residues: Large ribosomal subunit protein uL13 (142 aa).

This sequence belongs to the universal ribosomal protein uL13 family. In terms of assembly, part of the 50S ribosomal subunit.

In terms of biological role, this protein is one of the early assembly proteins of the 50S ribosomal subunit, although it is not seen to bind rRNA by itself. It is important during the early stages of 50S assembly. The polypeptide is Large ribosomal subunit protein uL13 (Azotobacter vinelandii (strain DJ / ATCC BAA-1303)).